Consider the following 574-residue polypeptide: Splicing factor U2af large subunit A (574 aa).

A disordered region spans residues 1–180 (MAEHEEQPYE…SKRVSGFDQG (180 aa)). The span at 18–41 (PAPASAYAEYPAPEGSPPAAAAKP) shows a compositional bias: low complexity. The span at 53–143 (RSQHETQPHD…ERRRDRDRDG (91 aa)) shows a compositional bias: basic and acidic residues. Basic residues predominate over residues 144-172 (HRRHRSRSRSPSKGRDRRSRSRSRSRSSK). RRM domains lie at 238 to 321 (RRVY…RPTD), 358 to 436 (DRIF…RANQ), and 479 to 565 (QVVS…YPED).

The protein belongs to the splicing factor SR family.

It is found in the nucleus. Functionally, necessary for the splicing of pre-mRNA. This Oryza sativa subsp. japonica (Rice) protein is Splicing factor U2af large subunit A (U2AF65A).